The chain runs to 144 residues: Large-conductance mechanosensitive channel (144 aa).

Transmembrane regions (helical) follow at residues 21 to 41 (VGIIIGAAFGKIVSSLVANVI) and 76 to 96 (GIFLQNIFDFIIVAFAVFCII). The tract at residues 105–144 (QRGGKTRRAVQTECGRDAAYRDPRSLETTKQRHGAGYNDD) is disordered. Residues 118-134 (CGRDAAYRDPRSLETTK) show a composition bias toward basic and acidic residues.

This sequence belongs to the MscL family. As to quaternary structure, homopentamer.

The protein localises to the cell inner membrane. Its function is as follows. Channel that opens in response to stretch forces in the membrane lipid bilayer. May participate in the regulation of osmotic pressure changes within the cell. In Sodalis glossinidius (strain morsitans), this protein is Large-conductance mechanosensitive channel.